The chain runs to 108 residues: Gibberellin-regulated protein 7 (108 aa).

The signal sequence occupies residues 1–23 (MKIIVSILVLASLLLISSSLASA).

Belongs to the GASA family. Six disulfide bonds may be present.

It localises to the secreted. Its function is as follows. Gibberellin-regulated protein that may function in hormonal controlled steps of development such as seed germination, flowering and seed maturation. In Arabidopsis thaliana (Mouse-ear cress), this protein is Gibberellin-regulated protein 7 (GASA7).